Here is a 257-residue protein sequence, read N- to C-terminus: Capsid protein (257 aa).

The Bipartite nuclear localization signal motif lies at 3-20 (KRTGDILMSSPLSKFRRK). Residues 40 to 54 (KRRSWTYRPMYRKPR) carry the Nuclear localization signal motif. A zinc finger spans residues 68–85 (CEGPCKVQSYEQRDDVKH). Residues 101–122 (ITHRVGKRFCIKSIYILGKIWM) carry the Nuclear export signal motif. The Bipartite nuclear localization signal motif lies at 201–248 (KRFFKVNTHVVYNHQEQAKYENHTENALLLYMACTHASNPVYATLKIR).

The protein belongs to the geminiviridae capsid protein family. As to quaternary structure, homomultimer. Binds to single-stranded and double-stranded viral DNA. Interacts (via nuclear localization signals) with host importin alpha-1a.

The protein localises to the virion. The protein resides in the host nucleus. Encapsidates the viral genome into characteristic twinned ('geminate') particles. Binds the genomic viral ssDNA and shuttles it into and out of the cell nucleus. Plays a role in protection of the genome from degradation, virus acquisition and transmission by insect vectors, infectivity, and systemic movement. The CP of monopartite geminiviruses is absolutely essential for virus movement. The polypeptide is Capsid protein (Solanum lycopersicum (Tomato)).